We begin with the raw amino-acid sequence, 228 residues long: CD302 antigen (228 aa).

The signal sequence occupies residues 1–20 (MPHAALSSLVLLSLATAIVA). Residues 21–165 (DCPSSTWVQF…YDKKYLSDNH (145 aa)) are Extracellular-facing. The 120-residue stretch at 30–149 (FQGSCYAFLQ…CEISSVEGTL (120 aa)) folds into the C-type lectin domain. N-linked (GlcNAc...) asparagine glycosylation occurs at N107. A disulfide bond links C125 and C140. The helical transmembrane segment at 166–186 (ILISTLVIASTVTLAVLGAII) threads the bilayer. Residues 187-228 (WFLYRRNARSGFTSFSPAPLSPYSDGCALVVAEEDEYAVQLD) lie on the Cytoplasmic side of the membrane.

It localises to the membrane. The protein resides in the cell projection. It is found in the filopodium. Its subcellular location is the cytoplasm. The protein localises to the cell cortex. It localises to the microvillus. Its function is as follows. Potential multifunctional C-type lectin receptor that may play roles in endocytosis and phagocytosis as well as in cell adhesion and migration. In Mus musculus (Mouse), this protein is CD302 antigen (Cd302).